The chain runs to 312 residues: Pre-mRNA-splicing factor 38A (312 aa).

Residues 1–179 (MANRTVKDAH…VLEEAEQLEP (179 aa)) form an N-terminal protein interaction domain region. Phosphoserine occurs at positions 11, 193, 194, 209, and 226. A coiled-coil region spans residues 170–204 (VLEEAEQLEPRVSALEEDMDDVESSEEEEEEDEKL). Residues 181–312 (VSALEEDMDD…SHKKSRRGNE (132 aa)) are disordered. A compositionally biased stretch (acidic residues) spans 184 to 202 (LEEDMDDVESSEEEEEEDE). Over residues 203 to 224 (KLERVPSPDHRRRSYRDLDKPR) the composition is skewed to basic and acidic residues. Basic residues-rich tracts occupy residues 225–294 (RSPT…RSHS) and 301–312 (KKSHKKSRRGNE).

This sequence belongs to the PRP38 family. Component of the spliceosome B complex. Interacts (via N-terminal interaction domain) with ZMAT2 and MFAP1.

It is found in the nucleus. Its function is as follows. Involved in pre-mRNA splicing as a component of the spliceosome. The sequence is that of Pre-mRNA-splicing factor 38A (PRPF38A) from Bos taurus (Bovine).